Here is a 299-residue protein sequence, read N- to C-terminus: N-acetylaspartate synthetase (299 aa).

Residues 44–57 (AAPGPAAAPPPAAG) show a composition bias toward pro residues. The tract at residues 44-70 (AAPGPAAAPPPAAGPQPHGGTGGAGPP) is disordered. Residues 60 to 70 (PHGGTGGAGPP) are compositionally biased toward gly residues. Residues 118–138 (YALLAALCFAVTRSLLLTCLV) traverse the membrane as a helical segment. One can recognise an N-acetyltransferase domain in the interval 143–280 (LALRYYYSRK…VLPGMTLSLA (138 aa)).

This sequence belongs to the NAT8 family. Expressed in brain, including in mesencephalic dopaminergic neurons of the substantia nigra and ventral tegmental area and oligodendrocytes. Expressed in cortical pyramidal neurons and granule cells of the hippocampus (at protein level).

It localises to the cytoplasm. It is found in the microsome membrane. The protein resides in the mitochondrion membrane. Its subcellular location is the endoplasmic reticulum membrane. It catalyses the reaction L-aspartate + acetyl-CoA = N-acetyl-L-aspartate + CoA + H(+). Its activity is regulated as follows. Aminooxyacetic acid (AOAA) blocks its activity in both cytoplasm and mitochondria. Catalyzes the synthesis of N-acetylaspartate acid (NAA) from L-aspartate and acetyl-CoA. Promotes dopamine uptake by regulating TNF-alpha expression. Attenuates methamphetamine-induced inhibition of dopamine uptake. The chain is N-acetylaspartate synthetase (Nat8l) from Rattus norvegicus (Rat).